The following is a 340-amino-acid chain: Guanine nucleotide-binding protein subunit beta-4 (340 aa).

N-acetylserine is present on serine 2. Phosphoserine is present on serine 2. WD repeat units lie at residues glycine 53–alanine 92, leucine 95–arginine 134, glycine 141–threonine 179, glycine 182–serine 221, and glycine 224–leucine 263. Residue histidine 266 is modified to Phosphohistidine. WD repeat units lie at residues asparagine 268–valine 307 and glycine 310–tryptophan 339.

Belongs to the WD repeat G protein beta family. As to quaternary structure, g proteins are composed of 3 units, alpha, beta and gamma. Strongly expressed in lung and placenta, whereas it is weakly expressed in brain and heart. Abundantly expressed in the axons and Schwann cells of peripheral nerves.

In terms of biological role, guanine nucleotide-binding proteins (G proteins) are involved as a modulator or transducer in various transmembrane signaling systems. The beta and gamma chains are required for the GTPase activity, for replacement of GDP by GTP, and for G protein-effector interaction. The sequence is that of Guanine nucleotide-binding protein subunit beta-4 (GNB4) from Homo sapiens (Human).